The primary structure comprises 313 residues: Homoserine O-succinyltransferase (313 aa).

The active-site Acyl-thioester intermediate is Cys-142. Substrate is bound by residues Lys-163 and Ser-192. Residue His-235 is the Proton acceptor of the active site. Glu-237 is an active-site residue. Arg-249 is a binding site for substrate.

It belongs to the MetA family.

It localises to the cytoplasm. The enzyme catalyses L-homoserine + succinyl-CoA = O-succinyl-L-homoserine + CoA. It functions in the pathway amino-acid biosynthesis; L-methionine biosynthesis via de novo pathway; O-succinyl-L-homoserine from L-homoserine: step 1/1. Its function is as follows. Transfers a succinyl group from succinyl-CoA to L-homoserine, forming succinyl-L-homoserine. The chain is Homoserine O-succinyltransferase from Vibrio campbellii (strain ATCC BAA-1116).